A 487-amino-acid chain; its full sequence is Glutamyl-tRNA(Gln) amidotransferase subunit A (487 aa).

Active-site charge relay system residues include K77 and S152. S176 (acyl-ester intermediate) is an active-site residue.

This sequence belongs to the amidase family. GatA subfamily. Heterotrimer of A, B and C subunits.

The enzyme catalyses L-glutamyl-tRNA(Gln) + L-glutamine + ATP + H2O = L-glutaminyl-tRNA(Gln) + L-glutamate + ADP + phosphate + H(+). Its function is as follows. Allows the formation of correctly charged Gln-tRNA(Gln) through the transamidation of misacylated Glu-tRNA(Gln) in organisms which lack glutaminyl-tRNA synthetase. The reaction takes place in the presence of glutamine and ATP through an activated gamma-phospho-Glu-tRNA(Gln). The sequence is that of Glutamyl-tRNA(Gln) amidotransferase subunit A from Ligilactobacillus salivarius (strain UCC118) (Lactobacillus salivarius).